The chain runs to 227 residues: Transcription antitermination protein NusB (227 aa).

Disordered stretches follow at residues 165-189 (ASES…SDED) and 201-227 (AEET…ADES). Composition is skewed to acidic residues over residues 178–189 (DDSDALDDSDED) and 201–214 (AEET…AEDS). Residues 215–227 (EVSKVSEEKADES) are compositionally biased toward basic and acidic residues.

It belongs to the NusB family.

In terms of biological role, involved in transcription antitermination. Required for transcription of ribosomal RNA (rRNA) genes. Binds specifically to the boxA antiterminator sequence of the ribosomal RNA (rrn) operons. This is Transcription antitermination protein NusB from Corynebacterium glutamicum (strain ATCC 13032 / DSM 20300 / JCM 1318 / BCRC 11384 / CCUG 27702 / LMG 3730 / NBRC 12168 / NCIMB 10025 / NRRL B-2784 / 534).